Here is a 932-residue protein sequence, read N- to C-terminus: Adhesion G protein-coupled receptor E2 (932 aa).

Residues 1 to 15 (MWGFWLLLFWGFSGT) form the signal peptide. Residues 16 to 652 (HRWGMTTLAI…TMEFSLYIIS (637 aa)) lie on the Extracellular side of the membrane. 2 EGF-like domains span residues 32-69 (GVNE…SNGQ) and 81-119 (DVNE…SAGG). Disulfide bonds link C36/C48, C42/C57, C85/C98, C92/C107, C137/C149, C143/C158, C160/C171, C177/C189, C183/C198, C226/C239, and C233/C248. Residues 133 to 172 (DVDECLTIGICPKNSNCSNSVGSYSCTCQSGFVSNGSTCE) enclose the EGF-like 3; calcium-binding domain. N148 and N167 each carry an N-linked (GlcNAc...) asparagine glycan. The region spanning 173-210 (DEDECVTRNACPEHATCHNTLGSYYCTCNEGLEFSGGG) is the EGF-like 4; calcium-binding domain. The EGF-like 5; calcium-binding domain maps to 222–260 (DVDECSRNSTLCGPSFICINTLGSYSCSCPAGFSLSTFQ). An N-linked (GlcNAc...) asparagine glycan is attached at N229. N-linked (GlcNAc...) asparagine glycans are attached at residues N269, N283, N309, N333, N344, N363, N405, N417, N474, and N499. An EGF-like 6; calcium-binding domain is found at 272–307 (DIDECDDICPSNSSCTNTLGSYFCTCHPGFASSNGQ). 2 disulfide bridges follow: C276-C286 and C280-C295. The EGF-like 7; calcium-binding domain maps to 319-354 (DIDECTQDPFRCGRNSSCTNVPGSYNCSCLPDFRMD). 2 disulfide bridges follow: C323–C336 and C330–C345. The 162-residue stretch at 482-643 (EYLEIESKVI…AIIMASGELT (162 aa)) folds into the GAIN-B domain. The short motif at 507–509 (RGD) is the Cell attachment site element. Cystine bridges form between C596-C625 and C613-C627. The segment at 596 to 643 (CVSWNTDVEDGRWTPSGCETVEASETHTVCSCNRMTNLAIIMASGELT) is GPS. The helical transmembrane segment at 653–673 (YVGTVISLVCLALAIATFLLF) threads the bilayer. The Cytoplasmic portion of the chain corresponds to 674 to 681 (RAVQNHNT). Residues 682-702 (YLHLHLCVCLFLAKILFLTGI) traverse the membrane as a helical segment. The Extracellular portion of the chain corresponds to 703-719 (DKTDNQTACAIIAGFLH). N-linked (GlcNAc...) asparagine glycosylation is present at N707. A helical membrane pass occupies residues 720–740 (YLFLACFFWMLVEAVMLFLMV). Residues 741–756 (RNLKVVNYFSSRNIKM) are Cytoplasmic-facing. Residues 757–777 (LHLCAFGYGLPVVVVIISATV) traverse the membrane as a helical segment. Over 778-795 (HPWGYGMHNRCWLNTETG) the chain is Extracellular. Residues 796–816 (FIWSFLGPVCMIITINSALLA) traverse the membrane as a helical segment. Topologically, residues 817 to 849 (WTLWVLRQKLCSVNSEVSKLKDTRLLTFKAIAQ) are cytoplasmic. A helical transmembrane segment spans residues 850 to 870 (IFILGCSWVLGIFQIGPLASI). Topologically, residues 871–872 (MA) are extracellular. The helical transmembrane segment at 873–893 (YLFTTINSLQGAFIFLIHCLL) threads the bilayer. The Cytoplasmic segment spans residues 894–932 (NRQVRDEYRKLLTRKTDLSSHSQTSGILLSSMPSTSKTG).

It belongs to the G-protein coupled receptor 2 family. Adhesion G-protein coupled receptor (ADGR) subfamily.

It is found in the cell membrane. Orphan receptor involved in cell adhesion and probably in cell-cell interactions involved specifically cells of the immune system. May play a role in regulatory T-cells (Treg) development. The polypeptide is Adhesion G protein-coupled receptor E2 (Adgre1) (Rattus norvegicus (Rat)).